The primary structure comprises 934 residues: UPF0182 protein sync_1321 (934 aa).

9 consecutive transmembrane segments (helical) span residues A2–I22, L45–W65, G86–I106, F129–G149, V165–P185, I208–W228, H251–S271, L300–V320, and L327–M347.

It belongs to the UPF0182 family.

It is found in the cell membrane. This chain is UPF0182 protein sync_1321, found in Synechococcus sp. (strain CC9311).